Reading from the N-terminus, the 418-residue chain is Tyrosine--tRNA ligase (418 aa).

L-tyrosine is bound at residue tyrosine 34. A 'HIGH' region motif is present at residues 39–48 (PTADSLHLGH). 2 residues coordinate L-tyrosine: tyrosine 169 and glutamine 173. Residues 229–233 (KFGKS) carry the 'KMSKS' region motif. Position 232 (lysine 232) interacts with ATP. Positions 352–418 (LNIVDMLVTA…GKKKYAVLTY (67 aa)) constitute an S4 RNA-binding domain.

It belongs to the class-I aminoacyl-tRNA synthetase family. TyrS type 1 subfamily. As to quaternary structure, homodimer.

The protein resides in the cytoplasm. It catalyses the reaction tRNA(Tyr) + L-tyrosine + ATP = L-tyrosyl-tRNA(Tyr) + AMP + diphosphate + H(+). Its function is as follows. Catalyzes the attachment of tyrosine to tRNA(Tyr) in a two-step reaction: tyrosine is first activated by ATP to form Tyr-AMP and then transferred to the acceptor end of tRNA(Tyr). The chain is Tyrosine--tRNA ligase from Streptococcus equi subsp. equi (strain 4047).